Reading from the N-terminus, the 169-residue chain is MADPARAAKLAQRIKVVVAEALGRKVKDPRLEGITVTDARVTNDLQHATIYYTVFGDQVVQADAAKGLEKAKGVLRQEVGRNITVRLTPTLEFVADQIPVNASNLEELLRAAKKRDAEVAALAAGAKHAGDADPYKSDIPEDVEIDEDDFDEEDEDLIDDEELDEDGNK.

The interval 124 to 169 is disordered; that stretch reads AGAKHAGDADPYKSDIPEDVEIDEDDFDEEDEDLIDDEELDEDGNK. Residues 128–139 show a composition bias toward basic and acidic residues; that stretch reads HAGDADPYKSDI. A compositionally biased stretch (acidic residues) spans 140-169; it reads PEDVEIDEDDFDEEDEDLIDDEELDEDGNK.

It belongs to the RbfA family. In terms of assembly, monomer. Binds 30S ribosomal subunits, but not 50S ribosomal subunits or 70S ribosomes.

It is found in the cytoplasm. Functionally, one of several proteins that assist in the late maturation steps of the functional core of the 30S ribosomal subunit. Associates with free 30S ribosomal subunits (but not with 30S subunits that are part of 70S ribosomes or polysomes). Required for efficient processing of 16S rRNA. May interact with the 5'-terminal helix region of 16S rRNA. This Arthrobacter sp. (strain FB24) protein is Ribosome-binding factor A.